A 205-amino-acid chain; its full sequence is Large ribosomal subunit protein uL4 (205 aa).

Residues 65-99 (RQKGTGGARHGSRKSPTFRHGGVYKGPTPRSHGHD) are disordered.

Belongs to the universal ribosomal protein uL4 family. As to quaternary structure, part of the 50S ribosomal subunit.

Its function is as follows. One of the primary rRNA binding proteins, this protein initially binds near the 5'-end of the 23S rRNA. It is important during the early stages of 50S assembly. It makes multiple contacts with different domains of the 23S rRNA in the assembled 50S subunit and ribosome. In terms of biological role, forms part of the polypeptide exit tunnel. In Ruegeria pomeroyi (strain ATCC 700808 / DSM 15171 / DSS-3) (Silicibacter pomeroyi), this protein is Large ribosomal subunit protein uL4.